The sequence spans 179 residues: Inner membrane-spanning protein YciB (179 aa).

5 helical membrane passes run 3–23, 49–69, 76–96, 119–139, and 149–169; these read FLYDLFPVILFFIVYKLFGIY, NALIMSGVIIVVFGGATLWLQ, WKPTILYWVFTVGLLGSQWLF, LNLAWAIFFLLLGFLNLYVAY, and FKLFGTMGLMFVFVIGQTLLL.

This sequence belongs to the YciB family.

The protein resides in the cell inner membrane. Functionally, plays a role in cell envelope biogenesis, maintenance of cell envelope integrity and membrane homeostasis. This chain is Inner membrane-spanning protein YciB, found in Methylobacillus flagellatus (strain ATCC 51484 / DSM 6875 / VKM B-1610 / KT).